Consider the following 194-residue polypeptide: Large ribosomal subunit protein eL15 (194 aa).

The tract at residues 160–194 (RGLTSAGKKGRGLMYKGKGTEKVRPSVRANSKKAK) is disordered.

It belongs to the eukaryotic ribosomal protein eL15 family.

This Methanococcus maripaludis (strain C7 / ATCC BAA-1331) protein is Large ribosomal subunit protein eL15.